Here is a 267-residue protein sequence, read N- to C-terminus: Methylglyoxal reductase DkgB (267 aa).

Residue Tyr-39 is the Proton donor of the active site. Residue His-97 participates in substrate binding. 179 to 231 (MTLAYGKALKDEVIARIAAKHNATPAQVILAWAMGEGYSVIPSSTKRENLESN) is a binding site for NADP(+).

It belongs to the aldo/keto reductase family. Monomer.

Its subcellular location is the cytoplasm. The catalysed reaction is hydroxyacetone + NADP(+) = methylglyoxal + NADPH + H(+). Aldo-keto reductase that significantly contributes to cellular methylglyoxal detoxification by catalyzing the NADPH-dependent conversion of methylglyoxal to acetol. The polypeptide is Methylglyoxal reductase DkgB (Escherichia coli O157:H7).